Reading from the N-terminus, the 1093-residue chain is Mediator of RNA polymerase II transcription subunit 14 (1093 aa).

Disordered regions lie at residues 1–62 (MPGV…IDGH) and 1034–1065 (ETKS…ANDT). Over residues 19-31 (DTQTPSNGDNLRN) the composition is skewed to polar residues. Residues 41 to 62 (KGDKDHDPDKESYAGKPRIDGH) show a composition bias toward basic and acidic residues. Over residues 1040–1056 (DYSTQPAPENQSQTGAP) the composition is skewed to polar residues.

Belongs to the Mediator complex subunit 14 family. As to quaternary structure, component of the Mediator complex.

The protein localises to the nucleus. In terms of biological role, component of the Mediator complex, a coactivator involved in the regulated transcription of nearly all RNA polymerase II-dependent genes. Mediator functions as a bridge to convey information from gene-specific regulatory proteins to the basal RNA polymerase II transcription machinery. Mediator is recruited to promoters by direct interactions with regulatory proteins and serves as a scaffold for the assembly of a functional preinitiation complex with RNA polymerase II and the general transcription factors. This chain is Mediator of RNA polymerase II transcription subunit 14 (rgr1), found in Aspergillus fumigatus (strain ATCC MYA-4609 / CBS 101355 / FGSC A1100 / Af293) (Neosartorya fumigata).